The chain runs to 627 residues: DEAD-box ATP-dependent RNA helicase 35A (627 aa).

Composition is skewed to low complexity over residues 1–15 (MAAATASSPATAAAA) and 52–61 (SSSAAEAASD). Disordered regions lie at residues 1–23 (MAAATASSPATAAAANSDDEDNY) and 40–85 (LRRL…LEAS). A compositionally biased stretch (pro residues) spans 62–72 (LPPPPPPPPNQ). Positions 182–210 (RDFRDLRLPEPMLRKLREKGIVQPTPIQV) match the Q motif motif. The Helicase ATP-binding domain occupies 213–397 (LPVVLSGRDM…KSALVKPVIV (185 aa)). Residue 226-233 (AFTGSGKT) coordinates ATP. The DEAD box signature appears at 345–348 (DEAD). Positions 408–568 (DVIQEVEYVK…RIPPVLAELN (161 aa)) constitute a Helicase C-terminal domain. A CCHC-type zinc finger spans residues 584-601 (KGCAYCGGLGHRVTDCPK).

This sequence belongs to the DEAD box helicase family. DDX41 subfamily.

The catalysed reaction is ATP + H2O = ADP + phosphate + H(+). This is DEAD-box ATP-dependent RNA helicase 35A from Oryza sativa subsp. japonica (Rice).